A 357-amino-acid chain; its full sequence is Dihydroorotate dehydrogenase (quinone) (357 aa).

Residues 61–65 (AGFDK) and T85 contribute to the FMN site. Residue K65 coordinates substrate. Residue 110–114 (NRFGF) coordinates substrate. Residues N141 and N172 each contribute to the FMN site. N172 serves as a coordination point for substrate. The active-site Nucleophile is S175. Substrate is bound at residue N177. FMN contacts are provided by K217 and G245. Position 246-247 (246-247 (NT)) interacts with substrate. Residues G268, G297, and 318–319 (YS) contribute to the FMN site.

This sequence belongs to the dihydroorotate dehydrogenase family. Type 2 subfamily. As to quaternary structure, monomer. Requires FMN as cofactor.

It is found in the cell membrane. It catalyses the reaction (S)-dihydroorotate + a quinone = orotate + a quinol. It functions in the pathway pyrimidine metabolism; UMP biosynthesis via de novo pathway; orotate from (S)-dihydroorotate (quinone route): step 1/1. Catalyzes the conversion of dihydroorotate to orotate with quinone as electron acceptor. In Xanthobacter autotrophicus (strain ATCC BAA-1158 / Py2), this protein is Dihydroorotate dehydrogenase (quinone).